The primary structure comprises 433 residues: Chaperone SurA (433 aa).

Residues 1 to 20 form the signal peptide; sequence MKNWRTLIFGLMFSVSTAFA. PpiC domains are found at residues 171 to 272 and 282 to 382; these read DTEL…KVND and VTEV…QLLD.

The protein localises to the periplasm. The catalysed reaction is [protein]-peptidylproline (omega=180) = [protein]-peptidylproline (omega=0). In terms of biological role, chaperone involved in the correct folding and assembly of outer membrane proteins. Recognizes specific patterns of aromatic residues and the orientation of their side chains, which are found more frequently in integral outer membrane proteins. May act in both early periplasmic and late outer membrane-associated steps of protein maturation. This is Chaperone SurA from Photorhabdus laumondii subsp. laumondii (strain DSM 15139 / CIP 105565 / TT01) (Photorhabdus luminescens subsp. laumondii).